Consider the following 140-residue polypeptide: Acyl-coenzyme A thioesterase 13 (140 aa).

The residue at position 1 (Met-1) is an N-acetylmethionine. N6-acetyllysine is present on residues Lys-27, Lys-37, and Lys-43. Position 46 (Glu-46) interacts with CoA. Residues Asn-50 and Gly-81 each contribute to the substrate site. Residues Ser-83, 90–95 (YMSPAK), and 108–113 (KQGKTL) each bind CoA. Residues Lys-108 and Lys-127 each carry the N6-acetyllysine modification. Position 137 (His-137) interacts with CoA.

Belongs to the thioesterase PaaI family. Homotetramer. Interacts with PCTP. As to expression, highly expressed in the kidney and moderately in the heart, liver, brain, small and large intestine. Also expressed in brown adipose tissue.

Its subcellular location is the cytoplasm. The protein localises to the cytosol. The protein resides in the mitochondrion. It localises to the nucleus. It is found in the cytoskeleton. Its subcellular location is the spindle. The catalysed reaction is a fatty acyl-CoA + H2O = a fatty acid + CoA + H(+). It carries out the reaction decanoyl-CoA + H2O = decanoate + CoA + H(+). The enzyme catalyses octanoyl-CoA + H2O = octanoate + CoA + H(+). It catalyses the reaction butanoyl-CoA + H2O = butanoate + CoA + H(+). The catalysed reaction is hexanoyl-CoA + H2O = hexanoate + CoA + H(+). It carries out the reaction tetradecanoyl-CoA + H2O = tetradecanoate + CoA + H(+). The enzyme catalyses hexadecanoyl-CoA + H2O = hexadecanoate + CoA + H(+). It catalyses the reaction dodecanoyl-CoA + H2O = dodecanoate + CoA + H(+). The catalysed reaction is (9Z)-octadecenoyl-CoA + H2O = (9Z)-octadecenoate + CoA + H(+). Functionally, catalyzes the hydrolysis of acyl-CoAs into free fatty acids and coenzyme A (CoASH), regulating their respective intracellular levels. Has acyl-CoA thioesterase activity towards medium (C12) and long-chain (C18) fatty acyl-CoA substrates. Can also hydrolyze 3-hydroxyphenylacetyl-CoA and 3,4-dihydroxyphenylacetyl-CoA (in vitro). May play a role in controlling adaptive thermogenesis. The protein is Acyl-coenzyme A thioesterase 13 of Mus musculus (Mouse).